Consider the following 329-residue polypeptide: RNA polymerase sigma factor SigB (329 aa).

Residues 1–12 (MTSPSDVEASTE) are compositionally biased toward polar residues. The disordered stretch occupies residues 1 to 27 (MTSPSDVEASTETVDRGSRRNQTNDNP). Positions 120–133 (DLIQEGNLGLIRAM) match the Polymerase core binding motif. Residues 290–309 (LDQIGRQFGLSRERVRQIER) constitute a DNA-binding region (H-T-H motif).

Belongs to the sigma-70 factor family.

Functionally, sigma factors are initiation factors that promote the attachment of RNA polymerase to specific initiation sites and are then released. This Corynebacterium diphtheriae (strain ATCC 700971 / NCTC 13129 / Biotype gravis) protein is RNA polymerase sigma factor SigB (sigB).